A 304-amino-acid polypeptide reads, in one-letter code: Undecaprenyl-diphosphatase (304 aa).

8 helical membrane-spanning segments follow: residues 5 to 25, 47 to 67, 72 to 92, 111 to 131, 137 to 157, 209 to 231, 248 to 268, and 283 to 303; these read FLFILKALIIAIVEGLTEFVP, GFPEMYEVVIQLGAILAVVVL, ISSSVVEFLSYIFSFIGLKTS, FGINVIIGTIPAAILGLLFHD, LFSTKTVAIGFIVGGILLIVI, ISGLSTTVATEFTFFLAIPAMVG, TNWISLILGFIVAFIVSLVVI, and FAIYRVFAGIVLAILIFTKVI.

This sequence belongs to the UppP family.

The protein localises to the cell membrane. It catalyses the reaction di-trans,octa-cis-undecaprenyl diphosphate + H2O = di-trans,octa-cis-undecaprenyl phosphate + phosphate + H(+). Catalyzes the dephosphorylation of undecaprenyl diphosphate (UPP). Confers resistance to bacitracin. This Clostridium perfringens (strain 13 / Type A) protein is Undecaprenyl-diphosphatase.